The primary structure comprises 119 residues: Fluoride-specific ion channel FluC (119 aa).

A run of 3 helical transmembrane segments spans residues 37–54, 61–83, and 93–112; these read LFAN…AETV, LLLI…ETVT, and ALSN…WLGL. Na(+) contacts are provided by glycine 69 and threonine 72.

This sequence belongs to the fluoride channel Fluc/FEX (TC 1.A.43) family.

It is found in the cell inner membrane. It carries out the reaction fluoride(in) = fluoride(out). With respect to regulation, na(+) is not transported, but it plays an essential structural role and its presence is essential for fluoride channel function. Functionally, fluoride-specific ion channel. Important for reducing fluoride concentration in the cell, thus reducing its toxicity. This is Fluoride-specific ion channel FluC from Neisseria meningitidis serogroup C (strain 053442).